Consider the following 220-residue polypeptide: Gene 32 protein (220 aa).

Residues 184–205 (NSAGGNGNAPGGGGAGAQVSAQ) are disordered. Residues 187 to 199 (GGNGNAPGGGGAG) show a composition bias toward gly residues.

The chain is Gene 32 protein (32) from Mycobacterium (Mycobacteriophage L5).